The sequence spans 160 residues: Transcription elongation factor GreA 2 (160 aa).

A coiled-coil region spans residues 9-73 (MTEEGKVKLE…RIKTVEHMLQ (65 aa)).

It belongs to the GreA/GreB family.

In terms of biological role, necessary for efficient RNA polymerase transcription elongation past template-encoded arresting sites. The arresting sites in DNA have the property of trapping a certain fraction of elongating RNA polymerases that pass through, resulting in locked ternary complexes. Cleavage of the nascent transcript by cleavage factors such as GreA or GreB allows the resumption of elongation from the new 3'terminus. GreA releases sequences of 2 to 3 nucleotides. In Lactiplantibacillus plantarum (strain ATCC BAA-793 / NCIMB 8826 / WCFS1) (Lactobacillus plantarum), this protein is Transcription elongation factor GreA 2.